A 195-amino-acid polypeptide reads, in one-letter code: CASP-like protein 1B1 (195 aa).

The Cytoplasmic segment spans residues 1–25 (MDLEKGKKPSEQAAACRIMQVKDKL). A helical transmembrane segment spans residues 26–46 (ITLQPVVRACVFLATAVAAVI). Residues 47 to 78 (MGLNKQSYTTVVAIVGTRPVTQTFTAKFKDTP) lie on the Extracellular side of the membrane. Residues 79–99 (AFVFFVIANAIASGYNLMVLV) traverse the membrane as a helical segment. Over 100 to 114 (TRRILQRRAQSLSVH) the chain is Cytoplasmic. A helical membrane pass occupies residues 115 to 135 (LLDMVILTLLATGSATAASMA). Over 136 to 160 (QLGKNGNLHARWNPICDKFGSFCNH) the chain is Extracellular. Residues 161 to 181 (GGIALMSSFIGVALMLALNLL) traverse the membrane as a helical segment. The Cytoplasmic segment spans residues 182–195 (SAAANSPRSNVTGQ).

The protein belongs to the Casparian strip membrane proteins (CASP) family. In terms of assembly, homodimer and heterodimers.

It is found in the cell membrane. This is CASP-like protein 1B1 from Oryza sativa subsp. indica (Rice).